The sequence spans 289 residues: Thymidylate synthase (289 aa).

Residues Arg-21 and 150–151 contribute to the dUMP site; that span reads RR. The active-site Nucleophile is Cys-170. DUMP-binding positions include 191-194, Asn-202, and 232-234; these read RSAD and HIY. Asp-194 serves as a coordination point for (6R)-5,10-methylene-5,6,7,8-tetrahydrofolate. (6R)-5,10-methylene-5,6,7,8-tetrahydrofolate is bound at residue Ala-288.

It belongs to the thymidylate synthase family. Bacterial-type ThyA subfamily. As to quaternary structure, homodimer.

It localises to the cytoplasm. It carries out the reaction dUMP + (6R)-5,10-methylene-5,6,7,8-tetrahydrofolate = 7,8-dihydrofolate + dTMP. The protein operates within pyrimidine metabolism; dTTP biosynthesis. Functionally, catalyzes the reductive methylation of 2'-deoxyuridine-5'-monophosphate (dUMP) to 2'-deoxythymidine-5'-monophosphate (dTMP) while utilizing 5,10-methylenetetrahydrofolate (mTHF) as the methyl donor and reductant in the reaction, yielding dihydrofolate (DHF) as a by-product. This enzymatic reaction provides an intracellular de novo source of dTMP, an essential precursor for DNA biosynthesis. The sequence is that of Thymidylate synthase from Malacoplasma penetrans (strain HF-2) (Mycoplasma penetrans).